An 891-amino-acid chain; its full sequence is Aconitate hydratase A (891 aa).

Residues C435, C501, and C504 each coordinate [4Fe-4S] cluster.

This sequence belongs to the aconitase/IPM isomerase family. Monomer. The cofactor is [4Fe-4S] cluster.

It carries out the reaction citrate = D-threo-isocitrate. The catalysed reaction is (2S,3R)-3-hydroxybutane-1,2,3-tricarboxylate = 2-methyl-cis-aconitate + H2O. The protein operates within carbohydrate metabolism; tricarboxylic acid cycle; isocitrate from oxaloacetate: step 2/2. Its pathway is organic acid metabolism; propanoate degradation. Its function is as follows. Involved in the catabolism of short chain fatty acids (SCFA) via the tricarboxylic acid (TCA)(acetyl degradation route) and probably the 2-methylcitrate cycle I (propionate degradation route). Catalyzes the reversible isomerization of citrate to isocitrate via cis-aconitate. The apo form of AcnA functions as a RNA-binding regulatory protein. Could catalyze the hydration of 2-methyl-cis-aconitate to yield (2R,3S)-2-methylisocitrate. The protein is Aconitate hydratase A (acn) of Legionella pneumophila subsp. pneumophila (strain Philadelphia 1 / ATCC 33152 / DSM 7513).